Reading from the N-terminus, the 236-residue chain is 3-deoxy-D-manno-octulosonic acid kinase (236 aa).

Aspartate 167 is a catalytic residue.

This sequence belongs to the protein kinase superfamily. KdkA/RfaP family.

It localises to the cell inner membrane. It carries out the reaction an alpha-Kdo-(2-&gt;6)-lipid IVA + ATP = a 4-O-phospho-alpha-Kdo-(2-&gt;6)-lipid IVA + ADP + H(+). It functions in the pathway bacterial outer membrane biogenesis; LPS core biosynthesis. Catalyzes the ATP-dependent phosphorylation of the 3-deoxy-D-manno-octulosonic acid (Kdo) residue in Kdo-lipid IV(A) at the 4-OH position. The sequence is that of 3-deoxy-D-manno-octulosonic acid kinase from Vibrio vulnificus (strain CMCP6).